A 184-amino-acid chain; its full sequence is CDP-archaeol synthase (184 aa).

5 helical membrane passes run 4–24, 54–74, 86–106, 122–142, and 145–165; these read IIMVLYSIFLFLPAFIANPGA, FIGGSLIGVLAGIIVYYIIYI, IISALPVLFAMSFGSLTGDIT, GSLLDQWPFVLMSFLFIFIFA, and FFLEFYGNFIAIILILVLTPP.

It belongs to the CDP-archaeol synthase family. Mg(2+) is required as a cofactor.

It localises to the cell membrane. It catalyses the reaction 2,3-bis-O-(geranylgeranyl)-sn-glycerol 1-phosphate + CTP + H(+) = CDP-2,3-bis-O-(geranylgeranyl)-sn-glycerol + diphosphate. The protein operates within membrane lipid metabolism; glycerophospholipid metabolism. In terms of biological role, catalyzes the formation of CDP-2,3-bis-(O-geranylgeranyl)-sn-glycerol (CDP-archaeol) from 2,3-bis-(O-geranylgeranyl)-sn-glycerol 1-phosphate (DGGGP) and CTP. This reaction is the third ether-bond-formation step in the biosynthesis of archaeal membrane lipids. The chain is CDP-archaeol synthase from Picrophilus torridus (strain ATCC 700027 / DSM 9790 / JCM 10055 / NBRC 100828 / KAW 2/3).